The primary structure comprises 354 residues: Glutamine synthetase (354 aa).

In terms of domain architecture, GS beta-grasp spans 22–101 (IQAEYVWVDG…VLAETYNSDG (80 aa)). One can recognise a GS catalytic domain in the interval 108–354 (FRHHAAKVME…IIVETTLLNA (247 aa)).

It belongs to the glutamine synthetase family. As to quaternary structure, homooctamer.

It localises to the cytoplasm. It carries out the reaction L-glutamate + NH4(+) + ATP = L-glutamine + ADP + phosphate + H(+). The polypeptide is Glutamine synthetase (GLN1) (Hebeloma cylindrosporum).